Here is a 485-residue protein sequence, read N- to C-terminus: E3 ubiquitin-protein ligase TRIM68 (485 aa).

The RING-type zinc-finger motif lies at 16–61 (CPICMTFLREPVSISCGHTFCHSCLSGLWKLPGESQNLSYTCPLCR). The segment at 93–134 (LKTDVCDLHKEQLTMFCKEDDMVTCEACKQSPEHEAHSVVPI) adopts a B box-type zinc-finger fold. Residues Cys98, His101, Cys120, and His126 each contribute to the Zn(2+) site. Residues 144-226 (KLQQALEHLR…EQEKGETASK (83 aa)) are a coiled coil. Residues 285–483 (LKTDCRVLGL…TPLTICTLGG (199 aa)) form the B30.2/SPRY domain.

Belongs to the TRIM/RBCC family. As to quaternary structure, interacts with AR/androgen receptor (via ligand-binding domain). Interacts with KAT5/TIP60. In terms of processing, auto-ubiquitinated.

It localises to the cytoplasm. Its subcellular location is the perinuclear region. It is found in the nucleus. The catalysed reaction is S-ubiquitinyl-[E2 ubiquitin-conjugating enzyme]-L-cysteine + [acceptor protein]-L-lysine = [E2 ubiquitin-conjugating enzyme]-L-cysteine + N(6)-ubiquitinyl-[acceptor protein]-L-lysine.. It functions in the pathway protein modification; protein ubiquitination. Functions as a ubiquitin E3 ligase. Acts as a coactivator of androgen receptor (AR) depending on its ubiquitin ligase activity. In Mus musculus (Mouse), this protein is E3 ubiquitin-protein ligase TRIM68 (Trim68).